Reading from the N-terminus, the 209-residue chain is Uracil phosphoribosyltransferase (209 aa).

5-phospho-alpha-D-ribose 1-diphosphate contacts are provided by residues Arg-79, Arg-104, and 131 to 139 (DPMLATGGS). Uracil-binding positions include Ile-194 and 199-201 (GDA). Asp-200 is a 5-phospho-alpha-D-ribose 1-diphosphate binding site.

Belongs to the UPRTase family. Mg(2+) serves as cofactor.

It catalyses the reaction UMP + diphosphate = 5-phospho-alpha-D-ribose 1-diphosphate + uracil. It participates in pyrimidine metabolism; UMP biosynthesis via salvage pathway; UMP from uracil: step 1/1. With respect to regulation, allosterically activated by GTP. In terms of biological role, catalyzes the conversion of uracil and 5-phospho-alpha-D-ribose 1-diphosphate (PRPP) to UMP and diphosphate. This chain is Uracil phosphoribosyltransferase, found in Citrifermentans bemidjiense (strain ATCC BAA-1014 / DSM 16622 / JCM 12645 / Bem) (Geobacter bemidjiensis).